We begin with the raw amino-acid sequence, 484 residues long: MAAGGDHGSPDSYRSPLASRYASPEMCFVFSDRYKFRTWRQLWLWLAEAEQTLGLPITDEQIQEMKSNLENIDFKMAAEEEKRLRHDVMAHVHTFGHCCPKAAGIIHLGATSCYVGDNTDLIILRNALDLLLPKLARVISRLADFAKERASLPTLGFTHFQPAQLTTVGKRCCLWIQDLCMDLQNLKRVRDDLRFRGVKGTTGTQASFLQLFEGDDHKVEQLDKMVTEKAGFKRAFIITGQTYTRKVDIEVLSVLASLGASVHKICTDIRLLANLKEMEEPFEKQQIGSSAMPYKRNPMRSERCCSLARHLMTLVMDPLQTASVQWFERTLDDSANRRICLAEAFLTADTILNTLQNISEGLVVYPKVIERRIRQELPFMATENIIMAMVKAGGSRQDCHEKIRVLSQQAASVVKQEGGDNDLIERIQVDAYFSPIHSQLDHLLDPSSFTGRASQQVQRFLEEEVYPLLKPYESVMKVKAELCL.

Alanine 2 is modified (N-acetylalanine). Substrate-binding positions include 20–21, 85–87, and 111–112; these read RY, RHD, and TS. Lysine 147 carries the N6-acetyllysine modification. The Proton donor/acceptor role is filled by histidine 159. Position 241 (glutamine 241) interacts with substrate. Residue serine 289 is the Proton donor/acceptor of the active site. Lysine 295 is subject to N6-acetyllysine. Substrate contacts are provided by arginine 303, arginine 329, serine 334, and arginine 338. Residue lysine 415 forms a Glycyl lysine isopeptide (Lys-Gly) (interchain with G-Cter in SUMO1) linkage.

This sequence belongs to the lyase 1 family. Adenylosuccinate lyase subfamily. Homotetramer. Residues from neighboring subunits contribute catalytic and substrate-binding residues to each active site. In terms of tissue distribution, ubiquitously expressed. Both isoforms are produced by all tissues. Isoform 2 is 10-fold less abundant than isoform 1.

It carries out the reaction N(6)-(1,2-dicarboxyethyl)-AMP = fumarate + AMP. The enzyme catalyses (2S)-2-[5-amino-1-(5-phospho-beta-D-ribosyl)imidazole-4-carboxamido]succinate = 5-amino-1-(5-phospho-beta-D-ribosyl)imidazole-4-carboxamide + fumarate. It functions in the pathway purine metabolism; AMP biosynthesis via de novo pathway; AMP from IMP: step 2/2. It participates in purine metabolism; IMP biosynthesis via de novo pathway; 5-amino-1-(5-phospho-D-ribosyl)imidazole-4-carboxamide from 5-amino-1-(5-phospho-D-ribosyl)imidazole-4-carboxylate: step 2/2. With respect to regulation, the enzyme reaction kinetics indicate cooperativity between subunits. Functionally, catalyzes two non-sequential steps in de novo AMP synthesis: converts (S)-2-(5-amino-1-(5-phospho-D-ribosyl)imidazole-4-carboxamido)succinate (SAICAR) to fumarate plus 5-amino-1-(5-phospho-D-ribosyl)imidazole-4-carboxamide, and thereby also contributes to de novo IMP synthesis, and converts succinyladenosine monophosphate (SAMP) to AMP and fumarate. The chain is Adenylosuccinate lyase (ADSL) from Homo sapiens (Human).